The primary structure comprises 164 residues: Ribonuclease P protein component 2 (164 aa).

This sequence belongs to the eukaryotic/archaeal RNase P protein component 2 family. In terms of assembly, consists of a catalytic RNA component and at least 4-5 protein subunits.

It localises to the cytoplasm. The catalysed reaction is Endonucleolytic cleavage of RNA, removing 5'-extranucleotides from tRNA precursor.. Part of ribonuclease P, a protein complex that generates mature tRNA molecules by cleaving their 5'-ends. The sequence is that of Ribonuclease P protein component 2 from Halobacterium salinarum (strain ATCC 29341 / DSM 671 / R1).